Consider the following 227-residue polypeptide: Uracil-DNA glycosylase (227 aa).

The active-site Proton acceptor is aspartate 68.

It belongs to the uracil-DNA glycosylase (UDG) superfamily. UNG family.

The protein localises to the cytoplasm. It catalyses the reaction Hydrolyzes single-stranded DNA or mismatched double-stranded DNA and polynucleotides, releasing free uracil.. Excises uracil residues from the DNA which can arise as a result of misincorporation of dUMP residues by DNA polymerase or due to deamination of cytosine. This Mycolicibacterium smegmatis (strain ATCC 700084 / mc(2)155) (Mycobacterium smegmatis) protein is Uracil-DNA glycosylase.